The following is a 2104-amino-acid chain: Phenolphthiocerol synthesis polyketide synthase type I Pks15/1 (2104 aa).

The Ketosynthase family 3 (KS3) domain maps to 41–464; sequence TEPVAVVGIG…GTNAHVILEE (424 aa). Catalysis depends on for beta-ketoacyl synthase activity residues C211, H346, and H386. Residues 571-887 are acyltransferase; that stretch reads TAVVFPGQGS…GQLFSTGMSV (317 aa). The For acyltransferase activity role is filled by S662. An N-terminal hotdog fold region spans residues 935–1057; it reads HALLGAVVER…GMLGVEAASS (123 aa). The interval 935–1095 is dehydratase; sequence HALLGAVVER…YAYGPGFQGL (161 aa). In terms of domain architecture, PKS/mFAS DH spans 935–1207; it reads HALLGAVVER…TRAMSAAQLR (273 aa). Catalysis depends on H967, which acts as the Proton acceptor; for dehydratase activity. The C-terminal hotdog fold stretch occupies residues 1069 to 1207; it reads AESVDISDGY…TRAMSAAQLR (139 aa). The Proton donor; for dehydratase activity role is filled by D1128. An enoylreductase region spans residues 1400-1705; the sequence is GTLEDLVIEP…QARHIGKVVL (306 aa). Residues 1530 to 1547 and 1719 to 1734 each bind NADP(+); these read VLIH…VQLA and TVLI…AVLA. Residues 1718-1899 are beta-ketoacyl reductase (KR); it reads ATVLITGATG…SVAWGLWEQS (182 aa). The Carrier domain maps to 2004 to 2079; it reads DALVGLVCLQ…AIAEYVGRQI (76 aa). S2039 is subject to O-(pantetheine 4'-phosphoryl)serine. The disordered stretch occupies residues 2081-2104; it reads DSQATQAEEEKLPESDGEMVSVTA.

The protein belongs to the thiolase-like superfamily. Beta-ketoacyl-ACP synthases family. It depends on pantetheine 4'-phosphate as a cofactor.

The enzyme catalyses a fatty acyl-[ACP] + malonyl-[ACP] + H(+) = a 3-oxoacyl-[ACP] + holo-[ACP] + CO2. It participates in lipid metabolism; fatty acid biosynthesis. Catalyzes the elongation by iterative transfer of p-hydroxybenzoyl group from FadD22 (pHBA-S-FAdD22) to form p-hydroxyphenylalkanoate (pHPA) intermediates during phenolphthiocerol (PPOL) biosynthesis. PPOL is an important intermediate in the biosynthesis of phenolic glycolipid (mycosid B). The polypeptide is Phenolphthiocerol synthesis polyketide synthase type I Pks15/1 (pks15/1) (Mycobacterium marinum (strain ATCC BAA-535 / M)).